A 459-amino-acid chain; its full sequence is Vicilin (459 aa).

A signal peptide spans 1–28 (MAATTMKASFPLLMLMGISFLASVCVSS). The Cupin type-1 1 domain maps to 36–194 (FIFKSNKFQT…SFNTDYEEIE (159 aa)). 3 disordered regions span residues 235–258 (LSKNAKSTSKKSVSSESEPFNLRS), 321–346 (ELVGQRNENQQEQRKEDDEEEEQGEE), and 430–459 (ENQKQSHFADAQPQQRERGSRETRDRLSSV). Low complexity predominate over residues 238 to 251 (NAKSTSKKSVSSES). The region spanning 254 to 426 (FNLRSRGPIY…AFPGSAQEVD (173 aa)) is the Cupin type-1 2 domain. Residues 337 to 346 (DDEEEEQGEE) are compositionally biased toward acidic residues. Positions 444-459 (QRERGSRETRDRLSSV) are enriched in basic and acidic residues.

This sequence belongs to the 7S seed storage protein family.

Its subcellular location is the vacuole. It localises to the aleurone grain. Seed storage protein. The sequence is that of Vicilin from Pisum sativum (Garden pea).